Here is a 222-residue protein sequence, read N- to C-terminus: Noggin (222 aa).

The first 19 residues, 1–19 (MDHSQCLVTIYALMVFLGL), serve as a signal peptide directing secretion. N-linked (GlcNAc...) asparagine glycosylation is present at Asn61. 4 disulfide bridges follow: Cys145/Cys182, Cys168/Cys218, Cys174/Cys220, and Cys197/Cys205.

Belongs to the noggin family. Homodimer.

The protein localises to the secreted. Functionally, patterns the embryo by interrupting bone morphogenetic proteins (BMP) signaling. Binds BMP-4 and BMP-2 with high affinity. Can abolish BMP-4 activity by blocking binding to cognate cell-surface receptors. Capable of inducing dorsal development in embryos. Causes dorsal mesodermal differentiation of animal cap ectoderm when coexpressed with xWNT-8 and nuclear, sequence-specific DNA-binding protein xBRA. None of these molecules causes dorsal mesoderm formation when expressed alone. The protein is Noggin (nog) of Xenopus laevis (African clawed frog).